The primary structure comprises 337 residues: Regulator of RpoS (337 aa).

The Response regulatory domain occupies 9–123 (QILIVEDEQV…NRLREMVFAC (115 aa)). Residue aspartate 58 is modified to 4-aspartylphosphate.

It belongs to the RssB family. As to quaternary structure, binds to RpoS. Post-translationally, phosphorylated. Phosphorylation stimulates the interaction with RpoS and, therefore, the proteolysis of RpoS.

Functionally, regulates the turnover of the sigma S factor (RpoS) by promoting its proteolysis in exponentially growing cells. Acts by binding and delivering RpoS to the ClpXP protease. RssB is not co-degraded with RpoS, but is released from the complex and can initiate a new cycle of RpoS recognition and degradation. The chain is Regulator of RpoS from Shigella flexneri.